The primary structure comprises 465 residues: Poly(A) polymerase I (465 aa).

Catalysis depends on residues D80, D82, and D162. The disordered stretch occupies residues 430-465; sequence APPEQKGMLNELDDDPAPRRRRSRPRKRAPRREGTV. Basic residues predominate over residues 448–459; it reads RRRRSRPRKRAP.

This sequence belongs to the tRNA nucleotidyltransferase/poly(A) polymerase family.

The catalysed reaction is RNA(n) + ATP = RNA(n)-3'-adenine ribonucleotide + diphosphate. Functionally, adds poly(A) tail to the 3' end of many RNAs, which usually targets these RNAs for decay. Plays a significant role in the global control of gene expression, through influencing the rate of transcript degradation, and in the general RNA quality control. The protein is Poly(A) polymerase I of Salmonella typhimurium (strain LT2 / SGSC1412 / ATCC 700720).